The sequence spans 101 residues: MVRVIIEFLGGLDVIVKKQRQYKVDVQLDGKDEINVGDLIQWIVDNLIEHEGDVNVFLENDSIRPGILTLINDTDWELEGEKEYVLEDGDVVSFTSTLHGG.

1-thioglycine is present on Gly-101. A Glycyl lysine isopeptide (Gly-Lys) (interchain with K-? in acceptor proteins) cross-link involves residue Gly-101.

It belongs to the URM1 family. C-terminal thiocarboxylation occurs in 2 steps, it is first acyl-adenylated (-COAMP) via the hesA/moeB/thiF part of UBA4, then thiocarboxylated (-COSH) via the rhodanese domain of UBA4.

Its subcellular location is the cytoplasm. The protein operates within tRNA modification; 5-methoxycarbonylmethyl-2-thiouridine-tRNA biosynthesis. In terms of biological role, acts as a sulfur carrier required for 2-thiolation of mcm(5)S(2)U at tRNA wobble positions of cytosolic tRNA(Lys), tRNA(Glu) and tRNA(Gln). Serves as sulfur donor in tRNA 2-thiolation reaction by being thiocarboxylated (-COSH) at its C-terminus by the MOCS3 homolog UBA4. The sulfur is then transferred to tRNA to form 2-thiolation of mcm(5)S(2)U. Prior mcm(5) tRNA modification by the elongator complex is required for 2-thiolation. Also acts as a ubiquitin-like protein (UBL) that is covalently conjugated via an isopeptide bond to lysine residues of target proteins such as AHP1. The thiocarboxylated form serves as substrate for conjugation and oxidative stress specifically induces the formation of UBL-protein conjugates. The sequence is that of Ubiquitin-related modifier 1 from Kluyveromyces lactis (strain ATCC 8585 / CBS 2359 / DSM 70799 / NBRC 1267 / NRRL Y-1140 / WM37) (Yeast).